The chain runs to 198 residues: Cyclin-dependent kinase inhibitor 1B (198 aa).

Polar residues predominate over residues 1-12 (MSNVRVSNGSPT). The interval 1–30 (MSNVRVSNGSPTSERRDAKQAEYPKPSACR) is disordered. Ser-10 carries the post-translational modification Phosphoserine; by UHMK1. Positions 13 to 22 (SERRDAKQAE) are enriched in basic and acidic residues. The interaction with CDK2 stretch occupies residues 51-91 (DMEEASQNKWNFDFQNHKPLEGKYEWQEVEKGSLPEFYYRP). Tyr-74 is modified (phosphotyrosine; by SRC). Positions 87 to 198 (FYYRPPRPPK…KKPGLRRRQT (112 aa)) are disordered. Tyr-88 carries the phosphotyrosine; by ABL, LYN and SRC modification. Tyr-89 bears the Phosphotyrosine mark. Polar residues predominate over residues 104–113 (QESQDVSGTR). The segment covering 126–137 (EDTHLVDQKTDA) has biased composition (basic and acidic residues). A Nuclear localization signal motif is present at residues 153–169 (KRPATDDSSPQNKRANR). Thr-157 carries the phosphothreonine; by CaMK1, PKB/AKT1 and PIM1 modification. At Thr-170 the chain carries Phosphothreonine. Polar residues predominate over residues 175 to 186 (SDGSPNAGSVEQ). Position 187 is a phosphothreonine; by PKB/AKT1, CDK1 and CDK2 (Thr-187). Thr-198 bears the Phosphothreonine; by CaMK1, PKB/AKT1, RPS6KA1, RPS6KA3 and PIM1 mark.

Belongs to the CDI family. As to quaternary structure, forms a ternary complex composed of CCNE1, CDK2 and CDKN1B. Interacts directly with CCNE1; the interaction is inhibited by CDK2-dependent phosphorylation on Thr-187. Interacts with COPS5, subunit of the COP9 signalosome complex; the interaction leads to CDKN1B degradation. Interacts with NUP50; the interaction leads to nuclear import and degradation of phosphorylated CDKN1B. Interacts with CCND1 and SNX6. Interacts (Thr-198-phosphorylated form) with 14-3-3 proteins, binds strongly YWHAQ, weakly YWHAE and YWHAH, but not YWHAB nor YWHAZ; the interaction with YWHAQ results in translocation to the cytoplasm. Interacts with AKT1 and LYN; the interactions lead to cytoplasmic mislocation, phosphorylation of CDKN1B and inhibition of cell cycle arrest. Forms a ternary complex with CCNA2 and CDK2; CDKN1B inhibits the kinase activity of CDK2 through conformational rearrangements. Interacts (unphosphorylated form) with CDK2. Forms a complex with CDK2 and SPDYA, but does not directly interact with SPDYA. Forms a ternary complex composed of cyclin D, CDK4 and CDKN1B. Interacts (phosphorylated on Tyr-88 and Tyr-89) with CDK4; the interaction is required for cyclin D and CDK4 complex assembly, induces nuclear translocation and activates the CDK4 kinase activity. Interacts with GRB2. Interacts with PIM1. Identified in a complex with SKP1, SKP2 and CKS1B. Interacts with UHMK1; the interaction leads to cytoplasmic mislocation, phosphorylation of CDKN1B and inhibition of cell cycle arrest. Also interacts with CDK1. Dephosphorylated on Thr-187 by PPM1H, leading to CDKN1B stability. In terms of processing, phosphorylated; phosphorylation occurs on serine, threonine and tyrosine residues. Phosphorylation on Ser-10 is the major site of phosphorylation in resting cells, takes place at the G(0)-G(1) phase and leads to protein stability. Phosphorylation on other sites is greatly enhanced by mitogens, growth factors, cMYC and in certain cancer cell lines. The phosphorylated form found in the cytoplasm is inactivate. Phosphorylation on Thr-198 is required for interaction with 14-3-3 proteins. Phosphorylation on Thr-187, by CDK1 and CDK2 leads to protein ubiquitination and proteasomal degradation. Tyrosine phosphorylation promotes this process. Phosphorylation by PKB/AKT1 can be suppressed by LY294002, an inhibitor of the catalytic subunit of PI3K. Phosphorylation on Tyr-88 and Tyr-89 has no effect on binding CDK2, but is required for binding CDK4. Dephosphorylated on tyrosine residues by G-CSF. Dephosphorylated on Thr-187 by PPM1H, leading to CDKN1B stability. Ubiquitinated; in the cytoplasm by the KPC complex (composed of RNF123/KPC1 and UBAC1/KPC2) and, in the nucleus, by SCF(SKP2). The latter requires prior phosphorylation on Thr-187. Ubiquitinated; by a TRIM21-containing SCF(SKP2)-like complex; leads to its degradation. Post-translationally, subject to degradation in the lysosome. Interaction with SNX6 promotes lysosomal degradation.

The protein resides in the nucleus. It localises to the cytoplasm. It is found in the endosome. Important regulator of cell cycle progression. Inhibits the kinase activity of CDK2 bound to cyclin A, but has little inhibitory activity on CDK2 bound to SPDYA. Involved in G1 arrest. Potent inhibitor of cyclin E- and cyclin A-CDK2 complexes. Forms a complex with cyclin type D-CDK4 complexes and is involved in the assembly, stability, and modulation of CCND1-CDK4 complex activation. Acts either as an inhibitor or an activator of cyclin type D-CDK4 complexes depending on its phosphorylation state and/or stoichometry. The polypeptide is Cyclin-dependent kinase inhibitor 1B (CDKN1B) (Canis lupus familiaris (Dog)).